The sequence spans 347 residues: NADH-quinone oxidoreductase subunit H (347 aa).

Helical transmembrane passes span 13 to 33 (LLIL…VAYI), 50 to 70 (PNVV…KFVF), 82 to 102 (GVFL…WAVI), 115 to 135 (VGIL…IMAG), 161 to 181 (IGFV…TDIV), 198 to 218 (FLDW…ISAL), 248 to 268 (FLLF…LTTI), 286 to 306 (VPGV…FALV), and 321 to 341 (LGWK…AAFL).

This sequence belongs to the complex I subunit 1 family. In terms of assembly, NDH-1 is composed of 14 different subunits. Subunits NuoA, H, J, K, L, M, N constitute the membrane sector of the complex.

It localises to the cell inner membrane. It catalyses the reaction a quinone + NADH + 5 H(+)(in) = a quinol + NAD(+) + 4 H(+)(out). Its function is as follows. NDH-1 shuttles electrons from NADH, via FMN and iron-sulfur (Fe-S) centers, to quinones in the respiratory chain. The immediate electron acceptor for the enzyme in this species is believed to be ubiquinone. Couples the redox reaction to proton translocation (for every two electrons transferred, four hydrogen ions are translocated across the cytoplasmic membrane), and thus conserves the redox energy in a proton gradient. This subunit may bind ubiquinone. This chain is NADH-quinone oxidoreductase subunit H, found in Chelativorans sp. (strain BNC1).